Consider the following 283-residue polypeptide: Tropomyosin (283 aa).

Residues 1–283 are a coiled coil; the sequence is MDAIKKKMQA…LDSAFVELIL (283 aa).

This sequence belongs to the tropomyosin family. Homodimer.

In terms of biological role, tropomyosin, in association with the troponin complex, plays a central role in the calcium dependent regulation of muscle contraction. This chain is Tropomyosin, found in Locusta migratoria (Migratory locust).